The sequence spans 212 residues: Cyclin-dependent kinase 2-interacting protein (212 aa).

At M1 the chain carries N-acetylmethionine. Residues S69 and S73 each carry the phosphoserine modification. Residues 74–106 are a coiled coil; sequence NDCAEKEHPEYSRELETLCEELQATLEGLTKIQ.

It belongs to the CINP family. Homodimer. Part of the 55LCC heterohexameric ATPase complex composed at least of AIRIM, AFG2A, AFG2B and CINP. Interacts with AIRIM. Interacts with CDK2 and CDC7. Interacts with the components of the replication complex, MCM2, MCM3, MCM4, MCM5, MCM6, MCM7 and with ORC2-containing complexes. Interacts with ATRIP. Interacts with CEP152. Associates with pre-60S ribosomal particles. Phosphorylated by CDC7 but not by CDK2.

The protein localises to the nucleus. In terms of biological role, component of the DNA replication complex, which interacts with two kinases, CDK2 and CDC7, thereby providing a functional and physical link between CDK2 and CDC7 during firing of the origins of replication. Regulates ATR-mediated checkpoint signaling in response to DNA damage. Part of the 55LCC heterohexameric ATPase complex which is chromatin-associated and promotes replisome proteostasis to maintain replication fork progression and genome stability. Required for replication fork progression, sister chromatid cohesion, and chromosome stability. The ATPase activity is specifically enhanced by replication fork DNA and is coupled to cysteine protease-dependent cleavage of replisome substrates in response to replication fork damage. Uses ATPase activity to process replisome substrates in S-phase, facilitating their proteolytic turnover from chromatin to ensure DNA replication and mitotic fidelity. As part of 55LCC complex, also involved in the cytoplasmic maturation steps of pre-60S ribosomal particles by promoting the release of shuttling protein RSL24D1/RLP24 from the pre-ribosomal particles. This chain is Cyclin-dependent kinase 2-interacting protein (CINP), found in Bos taurus (Bovine).